The following is a 323-amino-acid chain: Aldo-keto reductase family 1 member C4 (323 aa).

Residues 20–24 (GFGSY) and aspartate 50 each bind NADP(+). Tyrosine 55 serves as the catalytic Proton donor. Residue histidine 117 participates in substrate binding. Residues 166–167 (SN), glutamine 190, 216–221 (HSALGT), and 270–280 (KSYNEQRIREN) each bind NADP(+).

It belongs to the aldo/keto reductase family. As to quaternary structure, monomer. In terms of tissue distribution, high expression in liver. Also expressed in kidney.

It localises to the cytoplasm. The protein resides in the cytosol. It catalyses the reaction chlordecone alcohol + NADP(+) = chlordecone + NADPH + H(+). It carries out the reaction a 3alpha-hydroxysteroid + NADP(+) = a 3-oxosteroid + NADPH + H(+). The catalysed reaction is a 3alpha-hydroxysteroid + NAD(+) = a 3-oxosteroid + NADH + H(+). The enzyme catalyses 5alpha-androstane-3alpha,17beta-diol + NADP(+) = 17beta-hydroxy-5alpha-androstan-3-one + NADPH + H(+). It catalyses the reaction 5alpha-androstane-3beta,17beta-diol + NADP(+) = 17beta-hydroxy-5alpha-androstan-3-one + NADPH + H(+). It carries out the reaction 5alpha-androstane-3alpha,17beta-diol + NAD(+) = 17beta-hydroxy-5alpha-androstan-3-one + NADH + H(+). The catalysed reaction is 17beta-estradiol + NADP(+) = estrone + NADPH + H(+). The enzyme catalyses 17beta-estradiol + NAD(+) = estrone + NADH + H(+). It catalyses the reaction (20S)-hydroxypregn-4-en-3-one + NADP(+) = progesterone + NADPH + H(+). It carries out the reaction (20S)-hydroxypregn-4-en-3-one + NAD(+) = progesterone + NADH + H(+). The catalysed reaction is androsterone + NADP(+) = 5alpha-androstan-3,17-dione + NADPH + H(+). The enzyme catalyses testosterone + NADP(+) = androst-4-ene-3,17-dione + NADPH + H(+). It catalyses the reaction testosterone + NAD(+) = androst-4-ene-3,17-dione + NADH + H(+). It carries out the reaction 3alpha-hydroxy-5alpha-androstane 17-O-(beta-D-glucuronate) + NADP(+) = 5alpha-dihydrotestosterone 17-O-(beta-D-glucuronate) + NADPH + H(+). The catalysed reaction is (3beta,5alpha,17beta)-3-hydroxy-androstan-17-yl sulfate + NADP(+) = 5alpha-dihydrotestosterone sulfate + NADPH + H(+). The enzyme catalyses 5alpha-androstane-3alpha,17beta-diol + NAD(+) = androsterone + NADH + H(+). The protein operates within steroid metabolism. With respect to regulation, potently inhibited by benzbromarone, 3',3'',5',5''-tetrabromophenolphthalein (TBPP) and o-cresolphthalein. Functionally, cytosolic aldo-keto reductase that catalyzes the NADH and NADPH-dependent reduction of ketosteroids to hydroxysteroids. Liver specific enzyme that acts as an NAD(P)(H)-dependent 3-, 17- and 20-ketosteroid reductase on the steroid nucleus and side chain. Displays the ability to catalyze both oxidation and reduction in vitro, but most probably acts as a reductase in vivo since the oxidase activity measured in vitro is inhibited by physiological concentration of NADPH. Acts preferentially as a 3-alpha-hydroxysteroid dehydrogenase (HSD) with a subsidiary 3-beta-HSD activity. Catalyzes efficiently the transformation of the potent androgen 5-alpha-dihydrotestosterone (5alpha-DHT or 17beta-hydroxy-5alpha-androstan-3-one) into the less active form, 5-alpha-androstan-3-alpha,17-beta-diol (3-alpha-diol). Catalyzes the reduction of estrone into 17beta-estradiol but with low efficiency. Metabolizes a broad spectrum of natural and synthetic therapeutic steroid and plays an important role in metabolism of androgens, estrogens, progestereone and conjugated steroids. Catalyzes the biotransformation of the pesticide chlordecone (kepone) to its corresponding alcohol leading to increased biliary excretion of the pesticide and concomitant reduction of its neurotoxicity since bile is the major excretory route. This is Aldo-keto reductase family 1 member C4 (AKR1C4) from Macaca fuscata fuscata (Japanese macaque).